We begin with the raw amino-acid sequence, 708 residues long: Ubiquitin thioesterase Zranb1 (708 aa).

The RanBP2-type 1 zinc-finger motif lies at 3–33 (EHGIKWACEYCTYENWPSAIKCTMCRAQRPS). Zn(2+) is bound by residues Cys10, Cys13, Cys24, and Cys27. Residues 38–73 (TEDPFKSGSSDVGRDWDPSSTEGGSSPLICPDSSAR) form a disordered region. 2 consecutive RanBP2-type zinc fingers follow at residues 84-113 (NANK…QRRT) and 149-178 (RTQH…PRPN). Zn(2+)-binding residues include Cys90, Cys93, Cys104, Cys107, Cys155, Cys158, Cys169, and Cys172. The interval 202-224 (RWRGGCSSGNSQRRSPPTTKRDS) is disordered. The span at 209 to 219 (SGNSQRRSPPT) shows a compositional bias: polar residues. 2 ANK repeats span residues 260–290 (KKTD…SGGD) and 313–340 (YTLV…QQAA). One can recognise an OTU domain in the interval 432-592 (LYALWNRTAG…RGHFSALVAM (161 aa)). The Nucleophile role is filled by Cys443. Catalysis depends on His585, which acts as the Proton acceptor.

The protein belongs to the peptidase C64 family. In terms of assembly, interacts with TRAF6. Interacts with APC.

It is found in the cytoplasm. Its subcellular location is the nucleus. It catalyses the reaction Thiol-dependent hydrolysis of ester, thioester, amide, peptide and isopeptide bonds formed by the C-terminal Gly of ubiquitin (a 76-residue protein attached to proteins as an intracellular targeting signal).. Its function is as follows. Ubiquitin thioesterase, which specifically hydrolyzes 'Lys-29'-linked and 'Lys-33'-linked diubiquitin. Also cleaves 'Lys-63'-linked chains, but with 40-fold less efficiency compared to 'Lys-29'-linked ones. Positive regulator of the Wnt signaling pathway that deubiquitinates APC protein, a negative regulator of Wnt-mediated transcription. Acts as a regulator of autophagy by mediating deubiquitination of PIK3C3/VPS34, thereby promoting autophagosome maturation. Plays a role in the regulation of cell morphology and cytoskeletal organization. Required in the stress fiber dynamics and cell migration. This is Ubiquitin thioesterase Zranb1 from Mus musculus (Mouse).